Reading from the N-terminus, the 99-residue chain is MALTKAEMAEHLFETLGLNKRVAKEMVESFFEEIREALESGEQVKLSGFGNFDLRDKNQRPGRNPKTGEDIPISARRVVTFRPGQKLKARVEAANSGKK.

A disordered region spans residues 49–71 (FGNFDLRDKNQRPGRNPKTGEDI).

It belongs to the bacterial histone-like protein family. As to quaternary structure, heterodimer of an alpha and a beta chain.

In terms of biological role, this protein is one of the two subunits of integration host factor, a specific DNA-binding protein that functions in genetic recombination as well as in transcriptional and translational control. The protein is Integration host factor subunit alpha of Shewanella denitrificans (strain OS217 / ATCC BAA-1090 / DSM 15013).